The following is a 200-amino-acid chain: Holliday junction resolvase RecU (200 aa).

The disordered stretch occupies residues 1–25 (MTIRYPNGKRYNQASQPHKTPIKKH). Residues threonine 85, aspartate 87, glutamate 100, and glutamine 119 each contribute to the Mg(2+) site.

Belongs to the RecU family. It depends on Mg(2+) as a cofactor.

The protein resides in the cytoplasm. It catalyses the reaction Endonucleolytic cleavage at a junction such as a reciprocal single-stranded crossover between two homologous DNA duplexes (Holliday junction).. Endonuclease that resolves Holliday junction intermediates in genetic recombination. Cleaves mobile four-strand junctions by introducing symmetrical nicks in paired strands. Promotes annealing of linear ssDNA with homologous dsDNA. Required for DNA repair, homologous recombination and chromosome segregation. The protein is Holliday junction resolvase RecU of Bacillus thuringiensis (strain Al Hakam).